Consider the following 185-residue polypeptide: NADH-dependent FMN reductase AsuE2 (185 aa).

Residues 1 to 13 are compositionally biased toward low complexity; it reads MSTHTARRAGATA. The segment at 1-24 is disordered; sequence MSTHTARRAGATAGHDRDRGTEPG. Over residues 14-24 the composition is skewed to basic and acidic residues; that stretch reads GHDRDRGTEPG.

This sequence belongs to the non-flavoprotein flavin reductase family. Does not interact with AsuE1, suggesting a possible transient interaction between the two enzymes instead of formation of a stable complex.

It catalyses the reaction FMNH2 + NAD(+) = FMN + NADH + 2 H(+). The protein operates within antibiotic biosynthesis. Functionally, involved in the biosynthesis of the antibiotic asukamycin. When flavin concentration is low, AsuE2 assists the protoasukamycin 4-monooxygenase AsuE1 by providing a reduced form of flavin, enhancing AsuE1 activity. The sequence is that of NADH-dependent FMN reductase AsuE2 from Streptomyces nodosus subsp. asukaensis.